Consider the following 56-residue polypeptide: Large ribosomal subunit protein bL33 (56 aa).

The protein belongs to the bacterial ribosomal protein bL33 family.

In Aliarcobacter butzleri (strain RM4018) (Arcobacter butzleri), this protein is Large ribosomal subunit protein bL33.